The sequence spans 812 residues: DNA translocase FtsK 1 (812 aa).

Over residues 1-11 the composition is skewed to basic residues; sequence MTEKSHKKTAK. Residues 1–36 form a disordered region; it reads MTEKSHKKTAKGRAGSPSPTSARNKKADNGARGNKV. Residues 25–36 show a composition bias toward basic and acidic residues; sequence KKADNGARGNKV. 5 helical membrane-spanning segments follow: residues 63 to 83, 116 to 136, 156 to 176, 184 to 204, and 210 to 230; these read IGDALWLMGLAATLYLAISLI, VGYYLFGWSFWWWIAAACVVL, IAAAALFVLTVFSPVLEYFVL, LPVGAGGMVGIRVGAVFAWLL, and LLIILVVLLLSLSLLVQISWL. The Cytoplasmic segment spans residues 231–812; the sequence is EFLNGAGRAV…RKILAHKDHL (582 aa). The 210-residue stretch at 461–670 folds into the FtsK domain; that stretch reads GTPVVGDLAK…FTVQSKIDSR (210 aa). 481 to 486 serves as a coordination point for ATP; that stretch reads GSGKSV.

Belongs to the FtsK/SpoIIIE/SftA family. In terms of assembly, homohexamer. Forms a ring that surrounds DNA.

The protein resides in the cell inner membrane. Its function is as follows. Essential cell division protein that coordinates cell division and chromosome segregation. The N-terminus is involved in assembly of the cell-division machinery. The C-terminus functions as a DNA motor that moves dsDNA in an ATP-dependent manner towards the dif recombination site, which is located within the replication terminus region. Translocation stops specifically at Xer-dif sites, where FtsK interacts with the Xer recombinase, allowing activation of chromosome unlinking by recombination. FtsK orienting polar sequences (KOPS) guide the direction of DNA translocation. FtsK can remove proteins from DNA as it translocates, but translocation stops specifically at XerCD-dif site, thereby preventing removal of XerC and XerD from dif. The polypeptide is DNA translocase FtsK 1 (ftsK1) (Neisseria meningitidis serogroup B (strain ATCC BAA-335 / MC58)).